A 637-amino-acid chain; its full sequence is Threonine--tRNA ligase (637 aa).

Residues 1 to 61 form the TGS domain; the sequence is MPVITLPDGS…DKDAELAIVT (61 aa). Residues 242–533 are catalytic; the sequence is DHRKIGKKLG…LIEHYEGAFP (292 aa). Residues Cys333, His384, and His510 each coordinate Zn(2+).

It belongs to the class-II aminoacyl-tRNA synthetase family. Homodimer. It depends on Zn(2+) as a cofactor.

It localises to the cytoplasm. The enzyme catalyses tRNA(Thr) + L-threonine + ATP = L-threonyl-tRNA(Thr) + AMP + diphosphate + H(+). Functionally, catalyzes the attachment of threonine to tRNA(Thr) in a two-step reaction: L-threonine is first activated by ATP to form Thr-AMP and then transferred to the acceptor end of tRNA(Thr). Also edits incorrectly charged L-seryl-tRNA(Thr). The protein is Threonine--tRNA ligase of Hahella chejuensis (strain KCTC 2396).